Reading from the N-terminus, the 124-residue chain is Small ribosomal subunit protein uS12 (124 aa).

The residue at position 89 (Asp89) is a 3-methylthioaspartic acid. The segment at 103–124 (DTAGVKDRRQGRSKYGAKRPKD) is disordered. Positions 113–124 (GRSKYGAKRPKD) are enriched in basic residues.

The protein belongs to the universal ribosomal protein uS12 family. As to quaternary structure, part of the 30S ribosomal subunit. Contacts proteins S8 and S17. May interact with IF1 in the 30S initiation complex.

In terms of biological role, with S4 and S5 plays an important role in translational accuracy. Interacts with and stabilizes bases of the 16S rRNA that are involved in tRNA selection in the A site and with the mRNA backbone. Located at the interface of the 30S and 50S subunits, it traverses the body of the 30S subunit contacting proteins on the other side and probably holding the rRNA structure together. The combined cluster of proteins S8, S12 and S17 appears to hold together the shoulder and platform of the 30S subunit. The chain is Small ribosomal subunit protein uS12 from Acaryochloris marina (strain MBIC 11017).